The primary structure comprises 576 residues: Putative ankyrin repeat protein L86 (576 aa).

ANK repeat units lie at residues 68–101 (HGWTALMIASVTSSYWCTIDTVKLLLENGADPNI), 118–147 (TRINCLEINQRTNFLKTAQLLIEYGANVNF), 159–188 (SGGFILNSSLQYNNFDIIKILLDNNTNPNI), 192–223 (KGNTLLHNICIYNQSCDDIIKLLLNYNVDLNS), 227–260 (KRKTVLMYLCKFYNKTNNVNSIKLLLKNGANPNI), 264–300 (KGNTAMMYLFNKFYHEYGDNKYNIIKLLLQYGANPNI), 304–337 (SGISVLLRASTIQNGWERKNIIKFLLKHGADPNI), 341–373 (QGLTFLMLLVKNPQNHMTKEFLNFVLKYVDPNI), 377–408 (KGKNILHYIPSESIDSPDILKRLLEFTTNPNA), 412–446 (KGRTPLMLACKKFTSTNDIVKINLLVEYSVISLTD), and 448–480 (NGKKALDYAMNNTSNIRLFMVSILLEKGDTFDV).

This is Putative ankyrin repeat protein L86 from Acanthamoeba polyphaga mimivirus (APMV).